A 61-amino-acid polypeptide reads, in one-letter code: Bacteriocin mesentericin Y105 (61 aa).

Positions 1–24 (MTNMKSVEAYQQLDNQNLKKVVGG) are cleaved as a signal peptide. Cys33 and Cys38 are disulfide-bonded.

This sequence belongs to the bacteriocin class IIA/YGNGV family.

It is found in the secreted. Its function is as follows. Bacteriocin active against Listeria monocytogenes. The chain is Bacteriocin mesentericin Y105 (mesY) from Leuconostoc mesenteroides.